Reading from the N-terminus, the 287-residue chain is 4-hydroxybenzoate octaprenyltransferase (287 aa).

9 helical membrane-spanning segments follow: residues 21–41, 44–64, 91–111, 112–132, 139–159, 160–180, 211–231, 235–255, and 263–283; these read VGIF…AKGA, FKIA…GCIV, VTEA…LVLL, LNRL…VYPF, LPQL…FAAT, VGHV…WPIV, LMIG…GWYL, YWFY…QFLI, and CFAA…GILL.

Belongs to the UbiA prenyltransferase family. Mg(2+) is required as a cofactor.

It localises to the cell inner membrane. The enzyme catalyses all-trans-octaprenyl diphosphate + 4-hydroxybenzoate = 4-hydroxy-3-(all-trans-octaprenyl)benzoate + diphosphate. Its pathway is cofactor biosynthesis; ubiquinone biosynthesis. In terms of biological role, catalyzes the prenylation of para-hydroxybenzoate (PHB) with an all-trans polyprenyl group. Mediates the second step in the final reaction sequence of ubiquinone-8 (UQ-8) biosynthesis, which is the condensation of the polyisoprenoid side chain with PHB, generating the first membrane-bound Q intermediate 3-octaprenyl-4-hydroxybenzoate. The chain is 4-hydroxybenzoate octaprenyltransferase from Coxiella burnetii (strain CbuG_Q212) (Coxiella burnetii (strain Q212)).